We begin with the raw amino-acid sequence, 314 residues long: Methionyl-tRNA formyltransferase (314 aa).

109–112 provides a ligand contact to (6S)-5,6,7,8-tetrahydrofolate; it reads SLLP.

Belongs to the Fmt family.

The catalysed reaction is L-methionyl-tRNA(fMet) + (6R)-10-formyltetrahydrofolate = N-formyl-L-methionyl-tRNA(fMet) + (6S)-5,6,7,8-tetrahydrofolate + H(+). In terms of biological role, attaches a formyl group to the free amino group of methionyl-tRNA(fMet). The formyl group appears to play a dual role in the initiator identity of N-formylmethionyl-tRNA by promoting its recognition by IF2 and preventing the misappropriation of this tRNA by the elongation apparatus. This Alkaliphilus metalliredigens (strain QYMF) protein is Methionyl-tRNA formyltransferase.